We begin with the raw amino-acid sequence, 240 residues long: Glutathione-independent glyoxalase hsp3102 (240 aa).

Residues C141, H142, and E175 contribute to the active site.

It belongs to the peptidase C56 family. HSP31-like subfamily.

The protein resides in the cytoplasm. Its subcellular location is the nucleus. The catalysed reaction is methylglyoxal + H2O = (R)-lactate + H(+). In terms of biological role, catalyzes the conversion of methylglyoxal (MG) to D-lactate in a single glutathione (GSH)-independent step. May play a role in detoxifying endogenously produced glyoxals. Involved in protection against reactive oxygen species (ROS). In Schizosaccharomyces pombe (strain 972 / ATCC 24843) (Fission yeast), this protein is Glutathione-independent glyoxalase hsp3102.